The following is a 744-amino-acid chain: Phosphoribosylformylglycinamidine synthase subunit PurL (744 aa).

H50 is an active-site residue. Residues Y53 and K92 each contribute to the ATP site. Position 94 (E94) interacts with Mg(2+). Residues 95-98 (SHNH) and R117 contribute to the substrate site. H96 acts as the Proton acceptor in catalysis. D118 provides a ligand contact to Mg(2+). Q241 lines the substrate pocket. D269 is a binding site for Mg(2+). 313-315 (ESQ) contributes to the substrate binding site. The ATP site is built by D495 and G532. Residue N533 coordinates Mg(2+). S535 contacts substrate.

The protein belongs to the FGAMS family. In terms of assembly, monomer. Part of the FGAM synthase complex composed of 1 PurL, 1 PurQ and 2 PurS subunits.

It localises to the cytoplasm. It catalyses the reaction N(2)-formyl-N(1)-(5-phospho-beta-D-ribosyl)glycinamide + L-glutamine + ATP + H2O = 2-formamido-N(1)-(5-O-phospho-beta-D-ribosyl)acetamidine + L-glutamate + ADP + phosphate + H(+). The protein operates within purine metabolism; IMP biosynthesis via de novo pathway; 5-amino-1-(5-phospho-D-ribosyl)imidazole from N(2)-formyl-N(1)-(5-phospho-D-ribosyl)glycinamide: step 1/2. Functionally, part of the phosphoribosylformylglycinamidine synthase complex involved in the purines biosynthetic pathway. Catalyzes the ATP-dependent conversion of formylglycinamide ribonucleotide (FGAR) and glutamine to yield formylglycinamidine ribonucleotide (FGAM) and glutamate. The FGAM synthase complex is composed of three subunits. PurQ produces an ammonia molecule by converting glutamine to glutamate. PurL transfers the ammonia molecule to FGAR to form FGAM in an ATP-dependent manner. PurS interacts with PurQ and PurL and is thought to assist in the transfer of the ammonia molecule from PurQ to PurL. The chain is Phosphoribosylformylglycinamidine synthase subunit PurL from Rhizobium johnstonii (strain DSM 114642 / LMG 32736 / 3841) (Rhizobium leguminosarum bv. viciae).